The chain runs to 325 residues: Lipoyl synthase (325 aa).

Residues Cys-66, Cys-71, Cys-77, Cys-92, Cys-96, Cys-99, and Ser-303 each coordinate [4Fe-4S] cluster. Residues 78–292 enclose the Radical SAM core domain; that stretch reads WEDREATFLI…AQFAEGLGFA (215 aa).

Belongs to the radical SAM superfamily. Lipoyl synthase family. [4Fe-4S] cluster is required as a cofactor.

The protein resides in the cytoplasm. It catalyses the reaction [[Fe-S] cluster scaffold protein carrying a second [4Fe-4S](2+) cluster] + N(6)-octanoyl-L-lysyl-[protein] + 2 oxidized [2Fe-2S]-[ferredoxin] + 2 S-adenosyl-L-methionine + 4 H(+) = [[Fe-S] cluster scaffold protein] + N(6)-[(R)-dihydrolipoyl]-L-lysyl-[protein] + 4 Fe(3+) + 2 hydrogen sulfide + 2 5'-deoxyadenosine + 2 L-methionine + 2 reduced [2Fe-2S]-[ferredoxin]. The protein operates within protein modification; protein lipoylation via endogenous pathway; protein N(6)-(lipoyl)lysine from octanoyl-[acyl-carrier-protein]: step 2/2. Catalyzes the radical-mediated insertion of two sulfur atoms into the C-6 and C-8 positions of the octanoyl moiety bound to the lipoyl domains of lipoate-dependent enzymes, thereby converting the octanoylated domains into lipoylated derivatives. The polypeptide is Lipoyl synthase (Mycobacterium sp. (strain JLS)).